The primary structure comprises 956 residues: Endogenous retrovirus group K member 6 Pol protein (956 aa).

One can recognise a Reverse transcriptase domain in the interval 57–245; sequence LEKGHIEPSF…TPFHYLGMQI (189 aa). An LPQG motif is present at residues 161–164; the sequence is LPQG. The YXDD motif lies at 195–198; sequence CIDD. An RNase H type-1 domain is found at 460-590; the sequence is LENALTVFTD…ADLLVSSALI (131 aa). 4 residues coordinate Mg(2+): D469, E497, D517, and D582. The Integrase-type zinc-finger motif lies at 587–628; the sequence is SALIKAQELHALTHVNAAGLKNKFDVTWKQAKDIVQHCTQCQ. The Zn(2+) site is built by H596, H600, C624, and C627. The region spanning 642–803 is the Integrase catalytic domain; that stretch reads RGLCPNALWQ…TSAEQHLTGK (162 aa). Positions 811-859 form a DNA-binding region, integrase-type; the sequence is KLIWWKDNKNKTWEIGKVITWGRGFACVSPGENQLPVWIPTRHLKFYNE. The interval 865–890 is disordered; that stretch reads KKSTSAETETSQSSTVDSQDEQNGDV. Residues 869 to 879 are compositionally biased toward low complexity; the sequence is SAETETSQSST.

This sequence belongs to the beta type-B retroviral polymerase family. HERV class-II K(HML-2) pol subfamily. Post-translationally, cleavage sites that yield the mature proteins remain to be determined.

It carries out the reaction DNA(n) + a 2'-deoxyribonucleoside 5'-triphosphate = DNA(n+1) + diphosphate. The enzyme catalyses Endonucleolytic cleavage to 5'-phosphomonoester.. Its function is as follows. Early post-infection, the reverse transcriptase converts the viral RNA genome into double-stranded viral DNA. The RNase H domain of the reverse transcriptase performs two functions. It degrades the RNA template and specifically removes the RNA primer from the RNA/DNA hybrid. Following nuclear import, the integrase catalyzes the insertion of the linear, double-stranded viral DNA into the host cell chromosome. Endogenous Pol proteins may have kept, lost or modified their original function during evolution. The protein is Endogenous retrovirus group K member 6 Pol protein (ERVK-6) of Homo sapiens (Human).